Consider the following 479-residue polypeptide: Aspartyl/glutamyl-tRNA(Asn/Gln) amidotransferase subunit B (479 aa).

It belongs to the GatB/GatE family. GatB subfamily. In terms of assembly, heterotrimer of A, B and C subunits.

It catalyses the reaction L-glutamyl-tRNA(Gln) + L-glutamine + ATP + H2O = L-glutaminyl-tRNA(Gln) + L-glutamate + ADP + phosphate + H(+). The catalysed reaction is L-aspartyl-tRNA(Asn) + L-glutamine + ATP + H2O = L-asparaginyl-tRNA(Asn) + L-glutamate + ADP + phosphate + 2 H(+). In terms of biological role, allows the formation of correctly charged Asn-tRNA(Asn) or Gln-tRNA(Gln) through the transamidation of misacylated Asp-tRNA(Asn) or Glu-tRNA(Gln) in organisms which lack either or both of asparaginyl-tRNA or glutaminyl-tRNA synthetases. The reaction takes place in the presence of glutamine and ATP through an activated phospho-Asp-tRNA(Asn) or phospho-Glu-tRNA(Gln). The chain is Aspartyl/glutamyl-tRNA(Asn/Gln) amidotransferase subunit B from Geotalea daltonii (strain DSM 22248 / JCM 15807 / FRC-32) (Geobacter daltonii).